The following is a 69-amino-acid chain: Dodecin (69 aa).

3–5 (KVY) provides a ligand contact to FMN. CoA is bound by residues Lys-6, Arg-28, and 32–34 (TLR). The FMN site is built by Asp-37, Trp-38, Arg-45, Gln-57, and Arg-65. 65 to 67 (RLE) contacts CoA.

It belongs to the dodecin family. As to quaternary structure, homododecamer; four homotrimers assemble to form a dodecameric hollow sphere with an outer diameter of about 60 Angstroms. Flavin dimers are bound between subunits with a stoichiometry of 6 flavin dimers per dodecamer. Besides, trimeric coenzyme A molecules can be bound between subunits. A dodecamer can bind simultaneously 12 flavin and 12 coenzyme A molecules.

Functionally, may function as storage protein that sequesters various flavins and other cofactors, thereby protecting the cell against undesirable reactions mediated by the free cofactors. Binds and sequesters FMN, FAD, lumiflavin and lumichrome, and can also bind coenzyme A. The sequence is that of Dodecin from Thermus thermophilus (strain ATCC 27634 / DSM 579 / HB8).